Consider the following 87-residue polypeptide: DNA-directed RNA polymerase subunit omega (87 aa).

It belongs to the RNA polymerase subunit omega family. The RNAP catalytic core consists of 2 alpha, 1 beta, 1 beta' and 1 omega subunit. When a sigma factor is associated with the core the holoenzyme is formed, which can initiate transcription.

The catalysed reaction is RNA(n) + a ribonucleoside 5'-triphosphate = RNA(n+1) + diphosphate. Functionally, promotes RNA polymerase assembly. Latches the N- and C-terminal regions of the beta' subunit thereby facilitating its interaction with the beta and alpha subunits. The polypeptide is DNA-directed RNA polymerase subunit omega (Ectopseudomonas mendocina (strain ymp) (Pseudomonas mendocina)).